Consider the following 1238-residue polypeptide: Topoisomerase 1-associated factor 1 (1238 aa).

S626 and S654 each carry phosphoserine. The interval 1008–1051 (GIARSKKKDKRKRRKGEAKTNLPMFGDQDDERPQTVRERHGVFS) is disordered. Over residues 1010–1023 (ARSKKKDKRKRRKG) the composition is skewed to basic residues. Residues 1038–1050 (ERPQTVRERHGVF) are compositionally biased toward basic and acidic residues. 2 positions are modified to phosphoserine: S1056 and S1058. The disordered stretch occupies residues 1159 to 1218 (NNNNNQLSDDDVNSESRNSLGSSQPSNSQNMFQSEVYSRKESTKRSLEASAADESDEDEE). Polar residues predominate over residues 1173-1194 (ESRNSLGSSQPSNSQNMFQSEV). The span at 1195–1205 (YSRKESTKRSL) shows a compositional bias: basic and acidic residues. A compositionally biased stretch (acidic residues) spans 1209–1218 (AADESDEDEE). S1213 is modified (phosphoserine).

It belongs to the timeless family. Component of the fork protection complex (FPC) consisting of TOF1 and CSM3. Interacts with WSS1 and ESC4.

It localises to the nucleus. Its function is as follows. Forms a fork protection complex (FPC) with CSM3 and which is required for chromosome segregation during meiosis and DNA damage repair. FPC coordinates leading and lagging strand synthesis and moves with the replication fork. FPC stabilizes replication forks in a configuration that is recognized by replication checkpoint sensors and protects stalled replication forks against the fork-releasing activity of RRM3 helicase. In Saccharomyces cerevisiae (strain ATCC 204508 / S288c) (Baker's yeast), this protein is Topoisomerase 1-associated factor 1 (TOF1).